The sequence spans 140 residues: Small ribosomal subunit protein uS11 (140 aa).

Positions 116-140 are disordered; the sequence is GRVEDVTPIPHDGTRPKGGRRGRRV.

It belongs to the universal ribosomal protein uS11 family. As to quaternary structure, part of the 30S ribosomal subunit.

Its function is as follows. Located on the platform of the 30S subunit. The protein is Small ribosomal subunit protein uS11 of Thermococcus kodakarensis (strain ATCC BAA-918 / JCM 12380 / KOD1) (Pyrococcus kodakaraensis (strain KOD1)).